Reading from the N-terminus, the 162-residue chain is NADH-quinone oxidoreductase subunit I 2 (162 aa).

2 consecutive 4Fe-4S ferredoxin-type domains span residues 52-82 (LRRY…IEAG) and 93-122 (VRYD…EGPN). Positions 62, 65, 68, 72, 102, 105, 108, and 112 each coordinate [4Fe-4S] cluster.

Belongs to the complex I 23 kDa subunit family. In terms of assembly, NDH-1 is composed of 14 different subunits. Subunits NuoA, H, J, K, L, M, N constitute the membrane sector of the complex. It depends on [4Fe-4S] cluster as a cofactor.

The protein localises to the cell inner membrane. The enzyme catalyses a quinone + NADH + 5 H(+)(in) = a quinol + NAD(+) + 4 H(+)(out). NDH-1 shuttles electrons from NADH, via FMN and iron-sulfur (Fe-S) centers, to quinones in the respiratory chain. The immediate electron acceptor for the enzyme in this species is believed to be ubiquinone. Couples the redox reaction to proton translocation (for every two electrons transferred, four hydrogen ions are translocated across the cytoplasmic membrane), and thus conserves the redox energy in a proton gradient. This chain is NADH-quinone oxidoreductase subunit I 2, found in Rhodopseudomonas palustris (strain HaA2).